We begin with the raw amino-acid sequence, 151 residues long: Small ribosomal subunit protein uS19 (151 aa).

The protein belongs to the universal ribosomal protein uS19 family.

The sequence is that of Small ribosomal subunit protein uS19 (RPS15) from Picea mariana (Black spruce).